A 366-amino-acid polypeptide reads, in one-letter code: MAP kinase-activated protein kinase 2 (366 aa).

A Protein kinase domain is found at 30–291 (KVTSQVLGLG…ITEFMNHPWI (262 aa)). ATP is bound by residues 36–44 (LGLGINGKV) and lysine 59. Residue 105 to 107 (ECL) coordinates staurosporine. Aspartate 152 serves as the catalytic Proton acceptor. Threonine 188 carries the phosphothreonine; by MAPK14 modification. Serine 238 carries the phosphoserine; by MAPK14 modification. A Phosphoserine; by autocatalysis modification is found at serine 294. The interval 294 to 330 (STKVPQTPLHTSRVLKEDKERWEDVKEEMTSALATMR) is autoinhibitory helix. Threonine 300 carries the post-translational modification Phosphothreonine; by MAPK14. Lysine 319 is covalently cross-linked (Glycyl lysine isopeptide (Lys-Gly) (interchain with G-Cter in SUMO)). Residues 322-331 (MTSALATMRV) carry the Nuclear export signal (NES) motif. The segment at 332–356 (DYEQIKIKKIEDASNPLLLKRRKKA) is p38 MAPK-binding site. 2 short sequence motifs (bipartite nuclear localization signal) span residues 337–340 (KIKK) and 351–355 (KRRKK).

This sequence belongs to the protein kinase superfamily. CAMK Ser/Thr protein kinase family. As to quaternary structure, heterodimer with p38-alpha/MAPK14; this heterodimer forms a stable complex: molecules are positioned 'face to face' so that the ATP-binding sites of both kinases are at the heterodimer interface. Interacts with PHC2. Interacts with HSF1. In terms of processing, sumoylation inhibits the protein kinase activity. Post-translationally, phosphorylated and activated by MAP kinase p38-alpha/MAPK14 at Thr-188, Ser-238 and Thr-300.

It localises to the cytoplasm. The protein localises to the nucleus. It catalyses the reaction L-seryl-[protein] + ATP = O-phospho-L-seryl-[protein] + ADP + H(+). It carries out the reaction L-threonyl-[protein] + ATP = O-phospho-L-threonyl-[protein] + ADP + H(+). With respect to regulation, activated following phosphorylation by p38-alpha/MAPK14 following various stresses. Inhibited following sumoylation. Specifically inhibited by pyrrolopyridine inhibitors. Functionally, stress-activated serine/threonine-protein kinase involved in cytokine production, endocytosis, reorganization of the cytoskeleton, cell migration, cell cycle control, chromatin remodeling, DNA damage response and transcriptional regulation. Following stress, it is phosphorylated and activated by MAP kinase p38-alpha/MAPK14, leading to phosphorylation of substrates. Phosphorylates serine in the peptide sequence, Hyd-X-R-X(2)-S, where Hyd is a large hydrophobic residue. Phosphorylates ALOX5, CDC25B, CDC25C, CEP131, ELAVL1, HNRNPA0, HSP27/HSPB1, KRT18, KRT20, LIMK1, LSP1, PABPC1, PARN, PDE4A, RCSD1, RPS6KA3, TAB3 and TTP/ZFP36. Phosphorylates HSF1; leading to the interaction with HSP90 proteins and inhibiting HSF1 homotrimerization, DNA-binding and transactivation activities. Mediates phosphorylation of HSP27/HSPB1 in response to stress, leading to dissociation of HSP27/HSPB1 from large small heat-shock protein (sHsps) oligomers and impairment of their chaperone activities and ability to protect against oxidative stress effectively. Involved in inflammatory response by regulating tumor necrosis factor (TNF) and IL6 production post-transcriptionally: acts by phosphorylating AU-rich elements (AREs)-binding proteins ELAVL1, HNRNPA0, PABPC1 and TTP/ZFP36, leading to regulate the stability and translation of TNF and IL6 mRNAs. Phosphorylation of TTP/ZFP36, a major post-transcriptional regulator of TNF, promotes its binding to 14-3-3 proteins and reduces its ARE mRNA affinity leading to inhibition of dependent degradation of ARE-containing transcripts. Phosphorylates CEP131 in response to cellular stress following ultraviolet irradiation which promotes binding of CEP131 to 14-3-3 proteins and inhibits formation of novel centriolar satellites. Also involved in late G2/M checkpoint following DNA damage through a process of post-transcriptional mRNA stabilization: following DNA damage, relocalizes from nucleus to cytoplasm and phosphorylates HNRNPA0 and PARN, leading to stabilization of GADD45A mRNA. Involved in toll-like receptor signaling pathway (TLR) in dendritic cells: required for acute TLR-induced macropinocytosis by phosphorylating and activating RPS6KA3. This is MAP kinase-activated protein kinase 2 (MAPKAPK2) from Oryctolagus cuniculus (Rabbit).